We begin with the raw amino-acid sequence, 216 residues long: Thiopurine S-methyltransferase (216 aa).

Residues Trp-10, Leu-45, Glu-66, and Arg-123 each contribute to the S-adenosyl-L-methionine site.

Belongs to the class I-like SAM-binding methyltransferase superfamily. TPMT family.

It localises to the cytoplasm. The catalysed reaction is S-adenosyl-L-methionine + a thiopurine = S-adenosyl-L-homocysteine + a thiopurine S-methylether.. In Pseudomonas putida (strain ATCC 700007 / DSM 6899 / JCM 31910 / BCRC 17059 / LMG 24140 / F1), this protein is Thiopurine S-methyltransferase.